We begin with the raw amino-acid sequence, 219 residues long: Large ribosomal subunit protein bL25 (219 aa).

Positions 188–219 (TVAAPADTAVQPESSSTKGKKDEDGALAKDKK) are disordered. The span at 206–219 (GKKDEDGALAKDKK) shows a compositional bias: basic and acidic residues.

It belongs to the bacterial ribosomal protein bL25 family. CTC subfamily. Part of the 50S ribosomal subunit; part of the 5S rRNA/L5/L18/L25 subcomplex. Contacts the 5S rRNA. Binds to the 5S rRNA independently of L5 and L18.

This is one of the proteins that binds to the 5S RNA in the ribosome where it forms part of the central protuberance. The sequence is that of Large ribosomal subunit protein bL25 from Elusimicrobium minutum (strain Pei191).